A 166-amino-acid polypeptide reads, in one-letter code: Protein-export protein SecB (166 aa).

Belongs to the SecB family. Homotetramer, a dimer of dimers. One homotetramer interacts with 1 SecA dimer.

It localises to the cytoplasm. In terms of biological role, one of the proteins required for the normal export of preproteins out of the cell cytoplasm. It is a molecular chaperone that binds to a subset of precursor proteins, maintaining them in a translocation-competent state. It also specifically binds to its receptor SecA. This is Protein-export protein SecB from Acidiphilium cryptum (strain JF-5).